The primary structure comprises 294 residues: Nucleotide-binding protein A2cp1_0165 (294 aa).

17–24 is a binding site for ATP; that stretch reads GVSGSGKS. A GTP-binding site is contributed by 68-71; that stretch reads DARE.

The protein belongs to the RapZ-like family.

Functionally, displays ATPase and GTPase activities. This is Nucleotide-binding protein A2cp1_0165 from Anaeromyxobacter dehalogenans (strain 2CP-1 / ATCC BAA-258).